A 254-amino-acid polypeptide reads, in one-letter code: Proteasome subunit alpha (254 aa).

Residues E234–S254 are disordered.

This sequence belongs to the peptidase T1A family. As to quaternary structure, the 20S proteasome core is composed of 14 alpha and 14 beta subunits that assemble into four stacked heptameric rings, resulting in a barrel-shaped structure. The two inner rings, each composed of seven catalytic beta subunits, are sandwiched by two outer rings, each composed of seven alpha subunits. The catalytic chamber with the active sites is on the inside of the barrel. Has a gated structure, the ends of the cylinder being occluded by the N-termini of the alpha-subunits. Is capped by the proteasome-associated ATPase, ARC.

It localises to the cytoplasm. It participates in protein degradation; proteasomal Pup-dependent pathway. With respect to regulation, the formation of the proteasomal ATPase ARC-20S proteasome complex, likely via the docking of the C-termini of ARC into the intersubunit pockets in the alpha-rings, may trigger opening of the gate for substrate entry. Interconversion between the open-gate and close-gate conformations leads to a dynamic regulation of the 20S proteasome proteolysis activity. Component of the proteasome core, a large protease complex with broad specificity involved in protein degradation. This is Proteasome subunit alpha from Rhodococcus erythropolis (strain PR4 / NBRC 100887).